Reading from the N-terminus, the 289-residue chain is Rhodopsin (289 aa).

At 1–7 the chain is on the extracellular side; sequence YLVNPAA. The helical transmembrane segment at 8 to 32 threads the bilayer; it reads YAAPGAYMFLLILVGFPVNFLTLYV. Residues 33–44 are Cytoplasmic-facing; sequence TLEHKKLRTPLN. Residues 45 to 67 form a helical membrane-spanning segment; sequence YILLNLAVADLFMVLGGFTTTMY. The Extracellular portion of the chain corresponds to 68–81; that stretch reads TSMHGYFVLGRLGC. Cys81 and Cys158 are joined by a disulfide. The chain crosses the membrane as a helical span at residues 82–104; sequence NLEGFFATLGGEIALWSLVVLAI. The 'Ionic lock' involved in activated form stabilization signature appears at 105-107; sequence ERW. Residues 105-123 lie on the Cytoplasmic side of the membrane; the sequence is ERWIVVCKPISNFRFTEDH. The helical transmembrane segment at 124 to 144 threads the bilayer; that stretch reads AIMGLAFSWVMALTCAVPPLV. The Extracellular portion of the chain corresponds to 145-173; that stretch reads GWSRYIPEGMQCSCGVDYYTRAEGFNNES. Asn171 carries N-linked (GlcNAc...) asparagine glycosylation. Residues 174-195 traverse the membrane as a helical segment; that stretch reads FVIYMFIVHFLIPLSNNFFCYG. The Cytoplasmic segment spans residues 196-223; it reads RLLCAVKEAAAAQQESETTQRAEREVSR. The chain crosses the membrane as a helical span at residues 224–245; sequence MVVMMVVSFLMCWLPYASVAWY. The Extracellular portion of the chain corresponds to 246-257; it reads IFCNQGSEFGPI. The chain crosses the membrane as a helical span at residues 258-279; the sequence is FMTLPAFFAKSSAIYNPLIYIC. N6-(retinylidene)lysine is present on Lys267. The Cytoplasmic portion of the chain corresponds to 280 to 289; sequence MNKHVRHCMI.

The protein belongs to the G-protein coupled receptor 1 family. Opsin subfamily. In terms of processing, phosphorylated on some or all of the serine and threonine residues present in the C-terminal region. Post-translationally, contains one covalently linked retinal chromophore.

Its subcellular location is the membrane. The protein localises to the cell projection. The protein resides in the cilium. It localises to the photoreceptor outer segment. Its function is as follows. Photoreceptor required for image-forming vision at low light intensity. While most salt water fish species use retinal as chromophore, most freshwater fish use 3-dehydroretinal, or a mixture of retinal and 3-dehydroretinal. Light-induced isomerization of 11-cis to all-trans retinal triggers a conformational change that activates signaling via G-proteins. Subsequent receptor phosphorylation mediates displacement of the bound G-protein alpha subunit by arrestin and terminates signaling. This chain is Rhodopsin (rho), found in Cottocomephorus grewingkii (Baikal yellowfin).